Here is a 522-residue protein sequence, read N- to C-terminus: Biotin-dependent long chain acyl-coenzyme A carboxylase beta4 subunit (522 aa).

The region spanning 11-261 is the CoA carboxyltransferase N-terminal domain; it reads TAEKLAELRE…NCFDKPPVVN (251 aa). In terms of domain architecture, CoA carboxyltransferase C-terminal spans 270 to 503; that stretch reads GHDLELDSIV…RLLLRKSMHL (234 aa).

The protein belongs to the AccD/PCCB family. As to quaternary structure, the biotin-dependent long-chain acyl-CoA carboxylase (LCC) complex is composed of AccA3, which contains the biotin carboxylase (BC) and biotin carboxyl carrier protein (BCCP) domains, and AccD4, which contains the carboxyl transferase (CT) domain. The complex also contains the beta5 subunit AccD5 and the epsilon subunit AccE5. The four subunits are essential for activity, but AccD5, together with AccE5, probably plays a structural role rather than a catalytic one.

In terms of biological role, component of a biotin-dependent acyl-CoA carboxylase complex. This subunit transfers the CO2 from carboxybiotin to the CoA ester substrate. When associated with the alpha3 subunit AccA3, the beta5 subunit AccD5 and the epsilon subunit AccE5, forms the LCC complex, which is involved in the carboxylation of long chain acyl-CoA. The LCC complex can use C16-C24 substrates, the highest specific activity is obtained with carboxy-C20-CoA. Has low activity with acetyl-CoA and propionyl-CoA. The chain is Biotin-dependent long chain acyl-coenzyme A carboxylase beta4 subunit from Mycobacterium tuberculosis (strain ATCC 25618 / H37Rv).